The sequence spans 495 residues: Myocyte-specific enhancer factor 2A (495 aa).

Residues 3-57 (RKKIQITRIMDERNRQVTFTKRKFGLMKKAYELSVLCDCEIALIIFNSSNKLFQY) form the MADS-box domain. The segment at residues 58–86 (ASTDMDKVLLKYTEYNEPHESRTNSDIVE) is a DNA-binding region (mef2-type). Ser59 carries the phosphoserine; by CK2 modification. Position 98 is a phosphoserine (Ser98). Positions 175–225 (AESSMLSPPPATLHRNVSPGAPQRPPSTGSAGGMLSTTDLTVPNGAGNGPV) are disordered. Ser235 carries the post-translational modification Phosphoserine. A disordered region spans residues 242–271 (TGANSVGKVMPTKSPPPPGGGSVGMNSRKP). N6-acetyllysine is present on Lys249. Ser255 carries the phosphoserine modification. The interval 266-283 (MNSRKPDLRVVIPPSSKG) is required for interaction with MAPKs. Thr304 and Thr311 each carry phosphothreonine; by MAPK7 and MAPK14. Ser347 is subject to Phosphoserine; by MAPK7. Over residues 382–394 (SNLSINTNQNINI) the composition is skewed to polar residues. Residues 382 to 495 (SNLSINTNQN…KRMRMDTWVT (114 aa)) form a disordered region. Lys395 is subject to N6-acetyllysine; alternate. Lys395 participates in a covalent cross-link: Glycyl lysine isopeptide (Lys-Gly) (interchain with G-Cter in SUMO); alternate. Ser400 bears the Phosphoserine; by CDK5 mark. Thr407 carries the post-translational modification Phosphothreonine. Positions 421-433 (QQPPPQPPQPQPQ) are enriched in pro residues. Ser441 carries the phosphoserine modification. The span at 441–454 (SPVDSLSSSSSSYD) shows a compositional bias: low complexity. Basic and acidic residues-rich tracts occupy residues 455-465 (GSDREDPRGDF) and 476-495 (NAED…TWVT).

Binds DNA as a homo- or heterodimer. Dimerizes with MEF2D. Interacts with HDAC7. Interacts with PIAS1; the interaction enhances sumoylation. Interacts with HDAC4, HDAC9 and SLC2A4RG. Interacts (via the N-terminal) with MAPK7; the interaction results in the phosphorylation and transcriptional activity of MEF2A. Constitutive phosphorylation on Ser-400 promotes Lys-395 sumoylation thus preventing acetylation at this site. Dephosphorylation on Ser-400 by PPP3CA upon neuron depolarization promotes a switch from sumoylation to acetylation on residue Lys-395 leading to inhibition of dendrite claw differentiation. Phosphorylation on Thr-304 and Thr-311 are the main sites involved in p38 MAPK signaling and activate transcription. Phosphorylated on these sites by MAPK14/p38alpha and MAPK11/p38beta, but not by MAPK13/p38delta nor by MAPK12/p38gamma. Phosphorylation on Ser-400 by CDK5 induced by neurotoxicity inhibits MEF2A transcriptional activation leading to apoptosis of cortical neurons. Phosphorylation on Thr-304, Thr-311 and Ser-347 can be induced by EGF. Post-translationally, sumoylation on Lys-395 is enhanced by PIAS1 and represses transcriptional activity. Phosphorylation on Ser-400 is required for sumoylation. Has no effect on nuclear location nor on DNA binding. Sumoylated with SUMO1 and, to a lesser extent with SUMO2 and SUMO3. PIASx facilitates sumoylation in postsynaptic dendrites in the cerebellar cortex and promotes their morphogenesis. In terms of processing, acetylation on Lys-395 activates transcriptional activity. Acetylated by p300 on several sites in diffentiating myocytes. Acetylation on Lys-4 increases DNA binding and transactivation. Hyperacetylation by p300 leads to enhanced cardiac myocyte growth and heart failure. Proteolytically cleaved in cerebellar granule neurons on several sites by caspase 3 and caspase 7 following neurotoxicity. Preferentially cleaves the CDK5-mediated hyperphosphorylated form which leads to neuron apoptosis and transcriptional inactivation.

Its subcellular location is the nucleus. Its function is as follows. Transcriptional activator which binds specifically to the MEF2 element, 5'-YTA[AT](4)TAR-3', found in numerous muscle-specific genes. Also involved in the activation of numerous growth factor- and stress-induced genes. Mediates cellular functions not only in skeletal and cardiac muscle development, but also in neuronal differentiation and survival. Plays diverse roles in the control of cell growth, survival and apoptosis via p38 MAPK signaling in muscle-specific and/or growth factor-related transcription. In cerebellar granule neurons, phosphorylated and sumoylated MEF2A represses transcription of NUR77 promoting synaptic differentiation. Associates with chromatin to the ZNF16 promoter. This Rattus norvegicus (Rat) protein is Myocyte-specific enhancer factor 2A (Mef2a).